A 163-amino-acid polypeptide reads, in one-letter code: 6,7-dimethyl-8-ribityllumazine synthase (163 aa).

5-amino-6-(D-ribitylamino)uracil-binding positions include Phe-27, 58–60, and 87–89; these read ALE and CVV. A (2S)-2-hydroxy-3-oxobutyl phosphate-binding site is contributed by 92 to 93; the sequence is DT. The active-site Proton donor is His-95. Asn-120 provides a ligand contact to 5-amino-6-(D-ribitylamino)uracil. Arg-134 is a (2S)-2-hydroxy-3-oxobutyl phosphate binding site.

Belongs to the DMRL synthase family.

It catalyses the reaction (2S)-2-hydroxy-3-oxobutyl phosphate + 5-amino-6-(D-ribitylamino)uracil = 6,7-dimethyl-8-(1-D-ribityl)lumazine + phosphate + 2 H2O + H(+). The protein operates within cofactor biosynthesis; riboflavin biosynthesis; riboflavin from 2-hydroxy-3-oxobutyl phosphate and 5-amino-6-(D-ribitylamino)uracil: step 1/2. Catalyzes the formation of 6,7-dimethyl-8-ribityllumazine by condensation of 5-amino-6-(D-ribitylamino)uracil with 3,4-dihydroxy-2-butanone 4-phosphate. This is the penultimate step in the biosynthesis of riboflavin. The sequence is that of 6,7-dimethyl-8-ribityllumazine synthase from Rhodopseudomonas palustris (strain BisA53).